The chain runs to 512 residues: MFIESFKVESPNVKYTENEIESVYNYDTTELVHENRKDAGGYQWIVKPKTVQYHFKTDTRVPKLGVMLVGWGGNNGSTLTGGVIANREGISWATKDKIQQANYFGSLTQASSIRVGSFNGEEIYAPFKSLLPMVNPDDVVFGGWDISDMNLADAMTRARVFDIDLQKQLRPYMEHMVPLPGIYDPDFIAANQGSRANNVIKGTKKEQVERVIKDIREFKEKNKVDKVVVLWTGNTERYSNVVVGLNDTMENLLASLEKNESEISPSTSYALACIEENIPFINGSPQNTFVPGLIDLAIKKNSLIGGDDFKSGQTKMKSVLVDFLVGAGIKPTSIVSYNHLGNNDGMNLSAPQTFRSKEISKSNVVDDMVASNGILYEPGEHPDHVVVIKYVPYVGDSKRAMDEYTSEIFMGGTNTIVMHNTCEDSLLAAPIILDLVLLAELSTRIQLKAEEEDKFHSFHPVATILSYLTKAPLVPPGTPVVNALSKQRAMLENILRACVGLAPENNMILEYK.

24 residues coordinate NAD(+): G72, G73, N74, N75, D145, I182, Q192, R195, T232, G233, N234, T235, G283, S284, D308, S311, N342, N343, D344, K357, G395, D396, D424, and S425.

Belongs to the myo-inositol 1-phosphate synthase family. Requires NAD(+) as cofactor.

It is found in the cytoplasm. The protein localises to the cytosol. The protein resides in the nucleus. The enzyme catalyses D-glucose 6-phosphate = 1D-myo-inositol 3-phosphate. It participates in polyol metabolism; myo-inositol biosynthesis; myo-inositol from D-glucose 6-phosphate: step 1/2. In terms of biological role, key enzyme in myo-inositol biosynthesis pathway that catalyzes the conversion of glucose 6-phosphate to 1-myo-inositol 1-phosphate in a NAD-dependent manner. This Mesembryanthemum crystallinum (Common ice plant) protein is Inositol-3-phosphate synthase.